Consider the following 371-residue polypeptide: 4-hydroxy-3-methylbut-2-en-1-yl diphosphate synthase (flavodoxin) (371 aa).

Residues C270, C273, C305, and E312 each contribute to the [4Fe-4S] cluster site.

It belongs to the IspG family. It depends on [4Fe-4S] cluster as a cofactor.

The catalysed reaction is (2E)-4-hydroxy-3-methylbut-2-enyl diphosphate + oxidized [flavodoxin] + H2O + 2 H(+) = 2-C-methyl-D-erythritol 2,4-cyclic diphosphate + reduced [flavodoxin]. The protein operates within isoprenoid biosynthesis; isopentenyl diphosphate biosynthesis via DXP pathway; isopentenyl diphosphate from 1-deoxy-D-xylulose 5-phosphate: step 5/6. Its function is as follows. Converts 2C-methyl-D-erythritol 2,4-cyclodiphosphate (ME-2,4cPP) into 1-hydroxy-2-methyl-2-(E)-butenyl 4-diphosphate. This is 4-hydroxy-3-methylbut-2-en-1-yl diphosphate synthase (flavodoxin) from Shewanella loihica (strain ATCC BAA-1088 / PV-4).